We begin with the raw amino-acid sequence, 95 residues long: Small ribosomal subunit protein uS17 (95 aa).

It belongs to the universal ribosomal protein uS17 family. Part of the 30S ribosomal subunit.

In terms of biological role, one of the primary rRNA binding proteins, it binds specifically to the 5'-end of 16S ribosomal RNA. The protein is Small ribosomal subunit protein uS17 of Mesomycoplasma hyopneumoniae (strain 7448) (Mycoplasma hyopneumoniae).